We begin with the raw amino-acid sequence, 283 residues long: Pantothenate synthetase (283 aa).

Position 30-37 (30-37 (MGNLHDGH)) interacts with ATP. Histidine 37 acts as the Proton donor in catalysis. Glutamine 61 is a (R)-pantoate binding site. Glutamine 61 is a beta-alanine binding site. 149–152 (GEKD) is a binding site for ATP. Position 155 (glutamine 155) interacts with (R)-pantoate. Residues valine 178 and 186 to 189 (LSSR) each bind ATP.

Belongs to the pantothenate synthetase family. In terms of assembly, homodimer.

It is found in the cytoplasm. The catalysed reaction is (R)-pantoate + beta-alanine + ATP = (R)-pantothenate + AMP + diphosphate + H(+). Its pathway is cofactor biosynthesis; (R)-pantothenate biosynthesis; (R)-pantothenate from (R)-pantoate and beta-alanine: step 1/1. Catalyzes the condensation of pantoate with beta-alanine in an ATP-dependent reaction via a pantoyl-adenylate intermediate. The chain is Pantothenate synthetase from Salmonella arizonae (strain ATCC BAA-731 / CDC346-86 / RSK2980).